The sequence spans 334 residues: Anthranilate phosphoribosyltransferase (334 aa).

5-phospho-alpha-D-ribose 1-diphosphate-binding positions include glycine 79, 82–83 (GD), serine 87, 89–92 (NIST), 107–115 (KAGNRSISS), and serine 119. An anthranilate-binding site is contributed by glycine 79. Serine 91 is a Mg(2+) binding site. Asparagine 110 serves as a coordination point for anthranilate. Position 165 (arginine 165) interacts with anthranilate. Mg(2+) contacts are provided by aspartate 224 and glutamate 225.

The protein belongs to the anthranilate phosphoribosyltransferase family. As to quaternary structure, homodimer. Mg(2+) serves as cofactor.

It carries out the reaction N-(5-phospho-beta-D-ribosyl)anthranilate + diphosphate = 5-phospho-alpha-D-ribose 1-diphosphate + anthranilate. Its pathway is amino-acid biosynthesis; L-tryptophan biosynthesis; L-tryptophan from chorismate: step 2/5. In terms of biological role, catalyzes the transfer of the phosphoribosyl group of 5-phosphorylribose-1-pyrophosphate (PRPP) to anthranilate to yield N-(5'-phosphoribosyl)-anthranilate (PRA). The protein is Anthranilate phosphoribosyltransferase of Streptococcus thermophilus (strain ATCC BAA-491 / LMD-9).